The chain runs to 464 residues: ESX-1 secretion system protein EccE1 (464 aa).

The next 2 membrane-spanning stretches (helical) occupy residues 11–31 (FTTG…AICM) and 34–54 (DLLW…VLTI).

The protein belongs to the EccE family. Part of the ESX-1 / type VII secretion system (T7SS), which is composed of cytosolic and membrane components. The ESX-1 membrane complex is composed of EccB1, EccCa1, EccCb1, EccD1 and EccE1.

It localises to the cell inner membrane. In terms of biological role, part of the ESX-1 / type VII specialized secretion system (T7SS), which exports several proteins including EsxA and EsxB. Plays a role in DNA conjugation, in at least a donor strain. The sequence is that of ESX-1 secretion system protein EccE1 from Mycolicibacterium smegmatis (strain ATCC 700084 / mc(2)155) (Mycobacterium smegmatis).